Here is a 241-residue protein sequence, read N- to C-terminus: DnaJ homolog subfamily C member 4 (241 aa).

The region spanning 34-99 (TYYELLGVHP…QSRRSYDDQL (66 aa)) is the J domain. Residues 88–99 (REQSRRSYDDQL) are compositionally biased toward basic and acidic residues. The tract at residues 88–129 (REQSRRSYDDQLRSGSPPKSPRTTVHDKSAHQTHSSWTPPNA) is disordered. Residues 119 to 129 (QTHSSWTPPNA) are compositionally biased toward polar residues. A helical transmembrane segment spans residues 156–175 (VLGYCLLLMLAGMGLHYIAF). Residues 212–241 (QQERQRLGQRQPPPSEPTQGPEIVPRGAGP) are disordered.

The protein resides in the membrane. The chain is DnaJ homolog subfamily C member 4 (DNAJC4) from Homo sapiens (Human).